The chain runs to 122 residues: Small ribosomal subunit protein uS13 (122 aa).

A disordered region spans residues 97–122 (PVRGQRTHTNARTRKGPAKAIAGKKK).

Belongs to the universal ribosomal protein uS13 family. In terms of assembly, part of the 30S ribosomal subunit. Forms a loose heterodimer with protein S19. Forms two bridges to the 50S subunit in the 70S ribosome.

Located at the top of the head of the 30S subunit, it contacts several helices of the 16S rRNA. In the 70S ribosome it contacts the 23S rRNA (bridge B1a) and protein L5 of the 50S subunit (bridge B1b), connecting the 2 subunits; these bridges are implicated in subunit movement. Contacts the tRNAs in the A and P-sites. This is Small ribosomal subunit protein uS13 from Bartonella tribocorum (strain CIP 105476 / IBS 506).